Reading from the N-terminus, the 139-residue chain is MSTYYFVIVGQNDNPIYEKEFSTVNKELRKEDHRHLTQFIAHAALDLVDEHKWKTANMQLKSIDRFNQWFVSAFITASQIRFIIVHDNKNDEGIKNFFNEMYDTYIKNSMNAFYRINTPIKSPMFEKKSEIFGRKYLLS.

Belongs to the TRAPP small subunits family. Sedlin subfamily. In terms of assembly, part of the multisubunit TRAPP (transport protein particle) complex.

Its subcellular location is the cytoplasm. The protein localises to the perinuclear region. The protein resides in the endoplasmic reticulum. It is found in the golgi apparatus. May play a role in vesicular transport from endoplasmic reticulum to Golgi. Involved in dsRNA uptake. This Drosophila melanogaster (Fruit fly) protein is Probable trafficking protein particle complex subunit 2.